A 70-amino-acid polypeptide reads, in one-letter code: MWFEILPGLSVMGVCLLIPGLATAYIHRFTNGGKEKRVAHFGYHWNLMERDRRISGVDRYYVSKGLENID.

The chain crosses the membrane as a helical span at residues 1-21 (MWFEILPGLSVMGVCLLIPGL).

It belongs to the complex I NDUFA1 subunit family. In terms of assembly, complex I is composed of 45 different subunits.

It is found in the mitochondrion inner membrane. Accessory subunit of the mitochondrial membrane respiratory chain NADH dehydrogenase (Complex I), that is believed not to be involved in catalysis. Complex I functions in the transfer of electrons from NADH to the respiratory chain. The immediate electron acceptor for the enzyme is believed to be ubiquinone. This chain is NADH dehydrogenase [ubiquinone] 1 alpha subcomplex subunit 1 (NDUFA1), found in Gorilla gorilla gorilla (Western lowland gorilla).